The sequence spans 389 residues: S-adenosylmethionine synthase (389 aa).

H17 lines the ATP pocket. D19 contacts Mg(2+). E45 contacts K(+). The L-methionine site is built by E58 and Q101. The segment at 101–111 (QSPDIGQGVDV) is flexible loop. ATP-binding positions include 160–162 (DGK), 226–227 (RF), D235, 241–242 (RK), A258, and K262. D235 provides a ligand contact to L-methionine. Residue K266 coordinates L-methionine.

It belongs to the AdoMet synthase family. As to quaternary structure, homotetramer; dimer of dimers. Mg(2+) is required as a cofactor. The cofactor is K(+).

The protein localises to the cytoplasm. It carries out the reaction L-methionine + ATP + H2O = S-adenosyl-L-methionine + phosphate + diphosphate. Its pathway is amino-acid biosynthesis; S-adenosyl-L-methionine biosynthesis; S-adenosyl-L-methionine from L-methionine: step 1/1. Its function is as follows. Catalyzes the formation of S-adenosylmethionine (AdoMet) from methionine and ATP. The overall synthetic reaction is composed of two sequential steps, AdoMet formation and the subsequent tripolyphosphate hydrolysis which occurs prior to release of AdoMet from the enzyme. The polypeptide is S-adenosylmethionine synthase (Anaeromyxobacter sp. (strain Fw109-5)).